A 383-amino-acid chain; its full sequence is 3-dehydroquinate synthase (383 aa).

Residues 81 to 86 (EGEVSK), 115 to 119 (GVVGD), 139 to 140 (TS), Lys-152, and Lys-161 each bind NAD(+). The Zn(2+) site is built by Glu-194, His-256, and His-274.

It belongs to the sugar phosphate cyclases superfamily. Dehydroquinate synthase family. Co(2+) serves as cofactor. The cofactor is Zn(2+). NAD(+) is required as a cofactor.

It localises to the cytoplasm. The enzyme catalyses 7-phospho-2-dehydro-3-deoxy-D-arabino-heptonate = 3-dehydroquinate + phosphate. The protein operates within metabolic intermediate biosynthesis; chorismate biosynthesis; chorismate from D-erythrose 4-phosphate and phosphoenolpyruvate: step 2/7. Functionally, catalyzes the conversion of 3-deoxy-D-arabino-heptulosonate 7-phosphate (DAHP) to dehydroquinate (DHQ). This chain is 3-dehydroquinate synthase, found in Nitrobacter hamburgensis (strain DSM 10229 / NCIMB 13809 / X14).